The sequence spans 336 residues: MASWALSAALLCLGGAFAYSELHSLSLREGSALGQATVPGPPEEEQPVTKDCGIAPLRGAVEGSRIIGGSQADTGAWPWQVSLQVQDGDILMHVCGGALVRDRWVLTAAHCTKEARDPLKWRAVMGTNDLTRSPYHSRNIRITDIIIPPDFIMETFVNDIALFRLKRAVRYNDYIQPICLPFGVFQKLDQNTACFISGWGRTREEGNGTTILQEAKVHFISREVCSSDQGYSGMIPNTSFCAGHENGTFDSCRGDSGGPLMCYLPEHSRYFVMGITSYGHGCGRRHFPGVYSNPSFFQEWMTHYLSQGNINRLFNMDIVLGQVLTALGSVILLGVT.

An N-terminal signal peptide occupies residues 1-18 (MASWALSAALLCLGGAFA). At 19-312 (YSELHSLSLR…HYLSQGNINR (294 aa)) the chain is on the extracellular side. The 241-residue stretch at 66 to 306 (IIGGSQADTG…FQEWMTHYLS (241 aa)) folds into the Peptidase S1 domain. A disulfide bridge links C95 with C111. Catalysis depends on charge relay system residues H110 and D159. Intrachain disulfides connect C194/C262, C225/C241, and C252/C282. N-linked (GlcNAc...) asparagine glycans are attached at residues N207, N237, and N246. The active-site Charge relay system is S256. A helical membrane pass occupies residues 313 to 333 (LFNMDIVLGQVLTALGSVILL). Topologically, residues 334–336 (GVT) are cytoplasmic.

Belongs to the peptidase S1 family. Exclusively expressed in the testis, from spermatocytes to elongated spermatids (at protein level).

Its subcellular location is the cell membrane. The protein resides in the cytoplasmic vesicle. It is found in the secretory vesicle. The protein localises to the acrosome. In terms of biological role, required for male fertility. Plays a critical role in sperm capacitation and acrosome reactions during fertilization, and also plays a role in the regulation of proteins involved in spermatogenesis. Regulates protein pathways that promote chromosomal synapsis formation, double-strand break repair, formation of the inner mitochondrial membrane cristae and apoptosis in developing sperm. Required for normal sperm motility and binding to the zona pellucida, potentially via a role in ADAM3 protein maturation. This is Transmembrane protease serine 12 from Mus musculus (Mouse).